The following is a 430-amino-acid chain: tRNA(Ile)-lysidine synthase (430 aa).

ATP is bound at residue 24-29 (SGGLDS).

The protein belongs to the tRNA(Ile)-lysidine synthase family.

It localises to the cytoplasm. The enzyme catalyses cytidine(34) in tRNA(Ile2) + L-lysine + ATP = lysidine(34) in tRNA(Ile2) + AMP + diphosphate + H(+). Its function is as follows. Ligates lysine onto the cytidine present at position 34 of the AUA codon-specific tRNA(Ile) that contains the anticodon CAU, in an ATP-dependent manner. Cytidine is converted to lysidine, thus changing the amino acid specificity of the tRNA from methionine to isoleucine. This is tRNA(Ile)-lysidine synthase from Haemophilus influenzae (strain PittEE).